Reading from the N-terminus, the 61-residue chain is Large ribosomal subunit protein uL30 (61 aa).

This sequence belongs to the universal ribosomal protein uL30 family. In terms of assembly, part of the 50S ribosomal subunit.

This Mycolicibacterium gilvum (strain PYR-GCK) (Mycobacterium gilvum (strain PYR-GCK)) protein is Large ribosomal subunit protein uL30.